The following is a 62-amino-acid chain: Antitoxin VbhA (62 aa).

The Inhibitory (S/T)XXXE(G/N) motif motif lies at S20–G25. E24 is an ATP binding site.

As to quaternary structure, interacts with VbhT.

Functionally, antitoxin component of type II toxin-antitoxin (TA) system VbhT-VbhA. Acts by inhibiting the adenylyltransferase activity of VbhT; competes with ATP-binding and prevents productive ATP-binding to VbhT. In Bartonella schoenbuchensis (strain DSM 13525 / NCTC 13165 / R1), this protein is Antitoxin VbhA.